The chain runs to 460 residues: Serine incorporator 5 (460 aa).

Topologically, residues 1–36 (MCTPCCVSQLACCCGSAACSLCCGCCPKIKQSTSTR) are extracellular. Residues 37-57 (FMYALFFMLVTVTCVIMMSPT) traverse the membrane as a helical segment. At 58 to 89 (VEMAMREHIPFYSQMCQQLNAGENCSTLVGYS) the chain is on the cytoplasmic side. Residues 90-110 (AVYKVCFGMACFFFFFAVFTI) traverse the membrane as a helical segment. Topologically, residues 111 to 124 (RVQNSTGCRAAVHN) are extracellular. A glycan (N-linked (GlcNAc...) asparagine) is linked at Asn-114. A helical membrane pass occupies residues 125-145 (GFWFFKFVALLACCAGGFFLP). Residues 146–156 (NQDQFLEVWRY) lie on the Cytoplasmic side of the membrane. A helical transmembrane segment spans residues 157–177 (VGAAGGFLFIIIQLMLLVQFA). The Extracellular portion of the chain corresponds to 178-197 (HRWNQNWSSGATYNKLWYAA). N-linked (GlcNAc...) asparagine glycosylation occurs at Asn-183. Residues 198–218 (LALVTLVLFSVAVGGMVFMFM) form a helical membrane-spanning segment. The Cytoplasmic segment spans residues 219–230 (YYTHPEACFLNK). Residues 231–251 (IFLGVNGGLCFIVSLLAISPC) traverse the membrane as a helical segment. Over 252–259 (IQTFQPTS) the chain is Extracellular. The helical transmembrane segment at 260–280 (GLLQPAVITLYVMYLTFSALA) threads the bilayer. Over 281–311 (SKPIEMVEDEIKGNITVCVFPFKSGLKSDTN) the chain is Cytoplasmic. Residues 312-332 (IVTGVGTAILFCCILYSCLIS) form a helical membrane-spanning segment. Topologically, residues 333 to 391 (TTKRSSAALQVYRNDMPENERARCCFCWVDDTEDYDDEKTSGGQNVKYDERDGTVYSYC) are extracellular. A helical membrane pass occupies residues 392–412 (FFHFVFFLGSLYVMMTVTNWF). At 413–433 (HYDNAKIERLLEGSWSVFWIK) the chain is on the cytoplasmic side. Residues 434-454 (MASSWVCLFFYMWTLVVPMLF) traverse the membrane as a helical segment. At 455–460 (PQRFQA) the chain is on the extracellular side.

Belongs to the TDE1 family.

The protein localises to the cell membrane. It catalyses the reaction a 1,2-diacyl-sn-glycero-3-phospho-L-serine(in) = a 1,2-diacyl-sn-glycero-3-phospho-L-serine(out). The enzyme catalyses a 1,2-diacyl-sn-glycero-3-phosphocholine(in) = a 1,2-diacyl-sn-glycero-3-phosphocholine(out). The catalysed reaction is a 1,2-diacyl-sn-glycero-3-phosphoethanolamine(in) = a 1,2-diacyl-sn-glycero-3-phosphoethanolamine(out). Functionally, restriction factor required to restrict infectivity of gammaretroviruses: acts by inhibiting an early step of viral infection. Impairs the penetration of the viral particle into the cytoplasm. Non-ATP-dependent, non-specific lipid transporter for phosphatidylserine, phosphatidylcholine, and phosphatidylethanolamine. Functions as a scramblase that flips lipids in both directions across the membrane. Phospholipid scrambling results in gammaretroviral surface exposure of phosphatidylserine and loss of membrane asymmetry, which leads to loss of infectivity. Enhances the incorporation of serine into phosphatidylserine and sphingolipids. The protein is Serine incorporator 5 (serinc5) of Danio rerio (Zebrafish).